Reading from the N-terminus, the 307-residue chain is O-acetylserine dependent cystathionine beta-synthase (307 aa).

Lys-44 carries the N6-(pyridoxal phosphate)lysine modification. Pyridoxal 5'-phosphate contacts are provided by residues Asn-74, 178–182 (GSGGT), and Ser-265.

This sequence belongs to the cysteine synthase/cystathionine beta-synthase family. Requires pyridoxal 5'-phosphate as cofactor.

The enzyme catalyses O-acetyl-L-serine + L-homocysteine = L,L-cystathionine + acetate + H(+). Its function is as follows. Catalyzes the conversion of O-acetylserine and homocysteine to cystathionine. This Bacillus subtilis (strain 168) protein is O-acetylserine dependent cystathionine beta-synthase (mccA).